A 265-amino-acid chain; its full sequence is Hydroxyethylthiazole kinase 2 (265 aa).

Position 39 (methionine 39) interacts with substrate. Residues lysine 115 and threonine 168 each contribute to the ATP site. Glycine 195 lines the substrate pocket.

It belongs to the Thz kinase family. Mg(2+) serves as cofactor.

It catalyses the reaction 5-(2-hydroxyethyl)-4-methylthiazole + ATP = 4-methyl-5-(2-phosphooxyethyl)-thiazole + ADP + H(+). It participates in cofactor biosynthesis; thiamine diphosphate biosynthesis; 4-methyl-5-(2-phosphoethyl)-thiazole from 5-(2-hydroxyethyl)-4-methylthiazole: step 1/1. Functionally, catalyzes the phosphorylation of the hydroxyl group of 4-methyl-5-beta-hydroxyethylthiazole (THZ). The protein is Hydroxyethylthiazole kinase 2 of Clostridium botulinum (strain Okra / Type B1).